Reading from the N-terminus, the 292-residue chain is Ribosomal protein L11 methyltransferase (292 aa).

S-adenosyl-L-methionine-binding residues include T145, G166, D188, and N229.

Belongs to the methyltransferase superfamily. PrmA family.

It is found in the cytoplasm. It carries out the reaction L-lysyl-[protein] + 3 S-adenosyl-L-methionine = N(6),N(6),N(6)-trimethyl-L-lysyl-[protein] + 3 S-adenosyl-L-homocysteine + 3 H(+). Functionally, methylates ribosomal protein L11. In Pseudoalteromonas atlantica (strain T6c / ATCC BAA-1087), this protein is Ribosomal protein L11 methyltransferase.